Reading from the N-terminus, the 716-residue chain is Translation initiation factor IF-2 (716 aa).

The segment at 50-137 (FKKSAKPAGN…KPKKELPEKI (88 aa)) is disordered. Residues 92 to 101 (NNVQNTQFNN) are compositionally biased toward low complexity. Positions 102–118 (KNKKKNNNNKKNKRGKN) are enriched in basic residues. Over residues 125 to 137 (KQFKPKKELPEKI) the composition is skewed to basic and acidic residues. Residues 217-386 (IRPPVVTIMG…LLVSEVEELK (170 aa)) form the tr-type G domain. The tract at residues 226–233 (GHVDHGKT) is G1. Residue 226–233 (GHVDHGKT) coordinates GTP. Residues 251-255 (GITQH) form a G2 region. The interval 272–275 (DTPG) is G3. Residues 272–276 (DTPGH) and 326–329 (NKID) contribute to the GTP site. The G4 stretch occupies residues 326–329 (NKID). The segment at 362-364 (SAL) is G5.

The protein belongs to the TRAFAC class translation factor GTPase superfamily. Classic translation factor GTPase family. IF-2 subfamily.

Its subcellular location is the cytoplasm. Its function is as follows. One of the essential components for the initiation of protein synthesis. Protects formylmethionyl-tRNA from spontaneous hydrolysis and promotes its binding to the 30S ribosomal subunits. Also involved in the hydrolysis of GTP during the formation of the 70S ribosomal complex. This chain is Translation initiation factor IF-2, found in Bacillus licheniformis (strain ATCC 14580 / DSM 13 / JCM 2505 / CCUG 7422 / NBRC 12200 / NCIMB 9375 / NCTC 10341 / NRRL NRS-1264 / Gibson 46).